The primary structure comprises 383 residues: Creatine kinase, testis isozyme (383 aa).

Residues 14-100 (KRLSPEEEFP…LDPIIEDRHG (87 aa)) enclose the Phosphagen kinase N-terminal domain. Residues 99 to 112 (HGGYKPTDKHKTDL) are compositionally biased toward basic and acidic residues. The interval 99 to 119 (HGGYKPTDKHKTDLNPDNLKG) is disordered. Positions 127 to 369 (YVISSRVRTG…KLLVEMEKKL (243 aa)) constitute a Phosphagen kinase C-terminal domain. ATP-binding positions include 130–134 (SSRVR), histidine 193, arginine 238, arginine 294, 322–327 (RGTGGV), and aspartate 337.

The protein belongs to the ATP:guanido phosphotransferase family. As to expression, exists in many tissues, but preferentially in testis.

It catalyses the reaction creatine + ATP = N-phosphocreatine + ADP + H(+). In terms of biological role, reversibly catalyzes the transfer of phosphate between ATP and various phosphogens (e.g. creatine phosphate). Creatine kinase isoenzymes play a central role in energy transduction in tissues with large, fluctuating energy demands, such as skeletal muscle, heart, brain and spermatozoa. This Oncorhynchus mykiss (Rainbow trout) protein is Creatine kinase, testis isozyme (tck1).